The following is a 395-amino-acid chain: Putative nickel insertion protein (395 aa).

The protein belongs to the LarC family.

This chain is Putative nickel insertion protein, found in Archaeoglobus fulgidus (strain ATCC 49558 / DSM 4304 / JCM 9628 / NBRC 100126 / VC-16).